Consider the following 329-residue polypeptide: Tagatose 1,6-diphosphate aldolase 2 (329 aa).

Belongs to the aldolase LacD family.

It carries out the reaction D-tagatofuranose 1,6-bisphosphate = D-glyceraldehyde 3-phosphate + dihydroxyacetone phosphate. It functions in the pathway carbohydrate metabolism; D-tagatose 6-phosphate degradation; D-glyceraldehyde 3-phosphate and glycerone phosphate from D-tagatose 6-phosphate: step 2/2. The polypeptide is Tagatose 1,6-diphosphate aldolase 2 (lacD2) (Streptococcus mutans serotype c (strain ATCC 700610 / UA159)).